The sequence spans 348 residues: Uroporphyrinogen decarboxylase (348 aa).

Residues 27 to 31 (RQAGR), Phe46, Asp76, Tyr152, Ser207, and His320 contribute to the substrate site.

The protein belongs to the uroporphyrinogen decarboxylase family. Homodimer.

The protein localises to the cytoplasm. It catalyses the reaction uroporphyrinogen III + 4 H(+) = coproporphyrinogen III + 4 CO2. It functions in the pathway porphyrin-containing compound metabolism; protoporphyrin-IX biosynthesis; coproporphyrinogen-III from 5-aminolevulinate: step 4/4. In terms of biological role, catalyzes the decarboxylation of four acetate groups of uroporphyrinogen-III to yield coproporphyrinogen-III. The sequence is that of Uroporphyrinogen decarboxylase from Bacillus mycoides (strain KBAB4) (Bacillus weihenstephanensis).